The primary structure comprises 81 residues: Protein Vpu (81 aa).

Over 1–7 the chain is Extracellular; that stretch reads MQPLGII. Residues 8–28 form a helical membrane-spanning segment; sequence AIAALVVAIILAIVVWTIVFI. Residues 29 to 81 are Cytoplasmic-facing; it reads EYRRIKKQRRIDCLLDRITERAEDSGNESEGDREKLSKLVEMGHHAPWDIDDL. 2 positions are modified to phosphoserine; by host CK2: serine 53 and serine 57.

Belongs to the HIV-1 VPU protein family. Homopentamer. Interacts with host CD4 and BRTC; these interactions induce proteasomal degradation of CD4. Interacts with host BST2; this interaction leads to the degradation of host BST2. Interacts with host FBXW11. Interacts with host AP1M1; this interaction plays a role in the mistrafficking and subsequent degradation of host BST2. Interacts with host RANBP2; this interaction allows Vpu to down-regulate host BLM sumoylation. In terms of processing, phosphorylated by host CK2. This phosphorylation is necessary for interaction with human BTRC and degradation of CD4.

It localises to the host membrane. With respect to regulation, ion channel activity is inhibited by hexamethylene amiloride in vitro. Its function is as follows. Enhances virion budding by targeting host CD4 and Tetherin/BST2 to proteasome degradation. Degradation of CD4 prevents any unwanted premature interactions between viral Env and its host receptor CD4 in the endoplasmic reticulum. Degradation of antiretroviral protein Tetherin/BST2 is important for virion budding, as BST2 tethers new viral particles to the host cell membrane. Mechanistically, Vpu bridges either CD4 or BST2 to BTRC, a substrate recognition subunit of the Skp1/Cullin/F-box protein E3 ubiquitin ligase, induces their ubiquitination and subsequent proteasomal degradation. The alteration of the E3 ligase specificity by Vpu seems to promote the degradation of host IKBKB, leading to NF-kappa-B down-regulation and subsequent apoptosis. Acts as a viroporin that forms an oligomeric ion channel in membranes. Modulates the host DNA repair mechanisms to promote degradation of nuclear viral cDNA in cells that are already productively infected in order to suppress immune sensing and proviral hyper-integration (superinfection). Manipulates PML-NBs and modulates SUMOylation of host BLM protein thereby enhancing its DNA-end processing activity toward viral unintegrated linear DNA. Also inhibits RAD52-mediated homologous repair of viral cDNA, preventing the generation of dead-end circular forms of single copies of the long terminal repeat and permitting sustained nucleolytic attack. This chain is Protein Vpu, found in Human immunodeficiency virus type 1 group M subtype D (isolate ELI) (HIV-1).